Reading from the N-terminus, the 61-residue chain is Putative MSV199 domain-containing protein 200R (61 aa).

The protein is Putative MSV199 domain-containing protein 200R of Invertebrate iridescent virus 6 (IIV-6).